Consider the following 138-residue polypeptide: Cysteine desulfuration protein SufE (138 aa).

Cysteine 51 (cysteine persulfide intermediate) is an active-site residue.

The protein belongs to the SufE family. Homodimer. Interacts with SufS.

It localises to the cytoplasm. It participates in cofactor biosynthesis; iron-sulfur cluster biosynthesis. Functionally, participates in cysteine desulfuration mediated by SufS. Cysteine desulfuration mobilizes sulfur from L-cysteine to yield L-alanine and constitutes an essential step in sulfur metabolism for biosynthesis of a variety of sulfur-containing biomolecules. Functions as a sulfur acceptor for SufS, by mediating the direct transfer of the sulfur atom from the S-sulfanylcysteine of SufS, an intermediate product of cysteine desulfuration process. This is Cysteine desulfuration protein SufE from Escherichia coli O157:H7.